The following is a 57-amino-acid chain: Potassium channel toxin alpha-KTx 4.2 (57 aa).

The first 20 residues, 1–20 (MKVLYGILIIFILCSMFYLS), serve as a signal peptide directing secretion. A propeptide spans 21–22 (QE) (removed by a carboxypeptidase). Cystine bridges form between cysteine 29–cysteine 50, cysteine 35–cysteine 55, and cysteine 39–cysteine 57.

Belongs to the short scorpion toxin superfamily. Potassium channel inhibitor family. Alpha-KTx 04 subfamily. As to expression, expressed by the venom gland.

The protein localises to the secreted. In terms of biological role, blocker for small-conductance calcium-activated potassium channels KCa2.2/KCNN2 (Kd=80 nM) and KCa2.3/KCNN3 (Kd=197 nM) and ERG1/Kv11.1/KCNH2 potassium channels (53% inhibition at 5 uM). Has also been shown to inhibit Kv1.1/KCNA1 and Nav1.7/SCN9A with a moderate potency, as well as Kv11.1/KCNH2/ERG1 and Kv1.2/KCNA2 with a low potency. The sequence is that of Potassium channel toxin alpha-KTx 4.2 from Tityus serrulatus (Brazilian scorpion).